The following is an 852-amino-acid chain: DNA mismatch repair protein MutS (852 aa).

Residue 602–609 (GPNMSGKS) coordinates ATP.

Belongs to the DNA mismatch repair MutS family.

Its function is as follows. This protein is involved in the repair of mismatches in DNA. It is possible that it carries out the mismatch recognition step. This protein has a weak ATPase activity. This Streptococcus thermophilus (strain ATCC BAA-250 / LMG 18311) protein is DNA mismatch repair protein MutS.